Here is a 392-residue protein sequence, read N- to C-terminus: Succinate--CoA ligase [ADP-forming] subunit beta (392 aa).

An ATP-grasp domain is found at 9–248 (KGILKQFGVA…ITEEDPLEYE (240 aa)). ATP is bound by residues Lys50, 57–59 (GRG), Glu103, Met106, and Glu111. 2 residues coordinate Mg(2+): Asn203 and Asp217. Residues Asn268 and 325 to 327 (GIV) contribute to the substrate site.

This sequence belongs to the succinate/malate CoA ligase beta subunit family. Heterotetramer of two alpha and two beta subunits. It depends on Mg(2+) as a cofactor.

It carries out the reaction succinate + ATP + CoA = succinyl-CoA + ADP + phosphate. The enzyme catalyses GTP + succinate + CoA = succinyl-CoA + GDP + phosphate. It functions in the pathway carbohydrate metabolism; tricarboxylic acid cycle; succinate from succinyl-CoA (ligase route): step 1/1. Succinyl-CoA synthetase functions in the citric acid cycle (TCA), coupling the hydrolysis of succinyl-CoA to the synthesis of either ATP or GTP and thus represents the only step of substrate-level phosphorylation in the TCA. The beta subunit provides nucleotide specificity of the enzyme and binds the substrate succinate, while the binding sites for coenzyme A and phosphate are found in the alpha subunit. In Chlorobaculum parvum (strain DSM 263 / NCIMB 8327) (Chlorobium vibrioforme subsp. thiosulfatophilum), this protein is Succinate--CoA ligase [ADP-forming] subunit beta.